The primary structure comprises 357 residues: Glycerol-1-phosphate dehydrogenase [NAD(P)+] (357 aa).

NAD(+) is bound by residues 104 to 108 and 126 to 129; these read GKTID and TAAS. Residue D131 coordinates substrate. S135 is an NAD(+) binding site. D178 provides a ligand contact to substrate. Residues D178 and H258 each contribute to the Zn(2+) site. H262 lines the substrate pocket. H274 serves as a coordination point for Zn(2+).

Belongs to the glycerol-1-phosphate dehydrogenase family. Requires Zn(2+) as cofactor.

The protein localises to the cytoplasm. The enzyme catalyses sn-glycerol 1-phosphate + NAD(+) = dihydroxyacetone phosphate + NADH + H(+). The catalysed reaction is sn-glycerol 1-phosphate + NADP(+) = dihydroxyacetone phosphate + NADPH + H(+). It participates in membrane lipid metabolism; glycerophospholipid metabolism. Functionally, catalyzes the NAD(P)H-dependent reduction of dihydroxyacetonephosphate (DHAP or glycerone phosphate) to glycerol 1-phosphate (G1P). The G1P thus generated is used as the glycerophosphate backbone of phospholipids in the cellular membranes of Archaea. This is Glycerol-1-phosphate dehydrogenase [NAD(P)+] from Methanococcoides burtonii (strain DSM 6242 / NBRC 107633 / OCM 468 / ACE-M).